The chain runs to 615 residues: Medium-chain acyl-CoA ligase ACSF2, mitochondrial (615 aa).

The transit peptide at 1 to 41 (MAVYHGMLRFGRLCIASLGARGPRTLLSRPRPNSKLQSVRA) directs the protein to the mitochondrion. Residue Lys-179 is modified to N6-acetyllysine. Lys-182 is subject to N6-acetyllysine; alternate. At Lys-182 the chain carries N6-succinyllysine; alternate. Lys-199 carries the post-translational modification N6-acetyllysine. 263–271 (TSGTTGNPK) lines the ATP pocket. N6-acetyllysine is present on residues Lys-340 and Lys-398. Position 478 is an N6-succinyllysine (Lys-478). 2 residues coordinate ATP: Asp-493 and Arg-508. Lys-510 is subject to N6-acetyllysine. N6-acetyllysine; alternate is present on residues Lys-544 and Lys-570. N6-succinyllysine; alternate occurs at positions 544 and 570. Position 599 (Lys-599) interacts with ATP. The residue at position 599 (Lys-599) is an N6-succinyllysine.

It belongs to the ATP-dependent AMP-binding enzyme family.

It localises to the mitochondrion. The catalysed reaction is a medium-chain fatty acid + ATP + CoA = a medium-chain fatty acyl-CoA + AMP + diphosphate. The enzyme catalyses octanoate + ATP + CoA = octanoyl-CoA + AMP + diphosphate. Acyl-CoA synthases catalyze the initial reaction in fatty acid metabolism, by forming a thioester with CoA. Has some preference toward medium-chain substrates. Plays a role in adipocyte differentiation. This chain is Medium-chain acyl-CoA ligase ACSF2, mitochondrial, found in Mus musculus (Mouse).